The following is a 465-amino-acid chain: Serine/threonine-protein kinase AtPK1/AtPK6 (465 aa).

The LVxCxE motif signature appears at 91 to 96 (LVECLE). Positions 134–389 (FEVMKVVGKG…AEEIKQHKWF (256 aa)) constitute a Protein kinase domain. ATP contacts are provided by residues 140–148 (VGKGAFGKV) and Lys-163. The active-site Proton acceptor is the Asp-257. Residues 275-301 (DFGLAKEFEENTRSNSMCGTTEYMAPE) are activation loop. The residue at position 290 (Ser-290) is a Phosphoserine; by PDPK1. Positions 390-460 (KGINWKKLEA…VRPPPSFLHQ (71 aa)) constitute an AGC-kinase C-terminal domain. Thr-449 carries the post-translational modification Phosphothreonine; by TOR.

Belongs to the protein kinase superfamily. AGC Ser/Thr protein kinase family. S6 kinase subfamily. In terms of assembly, interacts with RAPTOR1. Interacts with RBR1-E2FB complex through its LVxCxE motif. Interacts with TAP46. Binds to MRF1. In terms of processing, undergoes serine-specific autophosphorylation. Phosphorylated at Thr-449 by TOR. In terms of tissue distribution, expressed in all tissues.

Its subcellular location is the cytoplasm. It is found in the nucleus. The catalysed reaction is L-seryl-[protein] + ATP = O-phospho-L-seryl-[protein] + ADP + H(+). The enzyme catalyses L-threonyl-[protein] + ATP = O-phospho-L-threonyl-[protein] + ADP + H(+). Activated by PDK1. Repressed during osmotic stress. Downstream effector of TOR signaling pathway involved in osmotic stress response. Could be involved in the control of plant growth and development. Phosphorylates the ribosomal proteins P14, P16 and S6. Functions as a repressor of cell proliferation and required for maintenance of chromosome stability and ploidy levels through the RBR1-E2F pathway. Mediates the phosphorylation of MRFs (e.g. MRF1). This chain is Serine/threonine-protein kinase AtPK1/AtPK6, found in Arabidopsis thaliana (Mouse-ear cress).